We begin with the raw amino-acid sequence, 698 residues long: Polyphosphate kinase (698 aa).

Asn63 is an ATP binding site. The Mg(2+) site is built by Arg390 and Arg420. The active-site Phosphohistidine intermediate is the His450. Positions 483, 579, and 607 each coordinate ATP.

The protein belongs to the polyphosphate kinase 1 (PPK1) family. Mg(2+) serves as cofactor. Post-translationally, an intermediate of this reaction is the autophosphorylated ppk in which a phosphate is covalently linked to a histidine residue through a N-P bond.

The enzyme catalyses [phosphate](n) + ATP = [phosphate](n+1) + ADP. Functionally, catalyzes the reversible transfer of the terminal phosphate of ATP to form a long-chain polyphosphate (polyP). This Xylella fastidiosa (strain 9a5c) protein is Polyphosphate kinase.